A 127-amino-acid chain; its full sequence is Ribonuclease P protein component 1 (127 aa).

This sequence belongs to the eukaryotic/archaeal RNase P protein component 1 family. Consists of a catalytic RNA component and at least 5 protein subunits. Forms a heterodimeric subcomplex with Rnp4. Reconstituted enzyme missing individual protein subunits is suboptimally active, showing each subunit contributes to optimization of activity.

It localises to the cytoplasm. The catalysed reaction is Endonucleolytic cleavage of RNA, removing 5'-extranucleotides from tRNA precursor.. Part of ribonuclease P (RNase P), a protein complex that generates mature tRNA molecules by cleaving their 5'-ends. Binds RNase P RNA. This is Ribonuclease P protein component 1 from Pyrococcus horikoshii (strain ATCC 700860 / DSM 12428 / JCM 9974 / NBRC 100139 / OT-3).